The chain runs to 423 residues: ATP-citrate synthase alpha chain protein 1 (423 aa).

3 residues coordinate citrate: Asn343, Thr345, and Arg376.

This sequence belongs to the succinate/malate CoA ligase beta subunit family. Heterooctamer of 4 alpha and 4 beta chains. In terms of tissue distribution, expressed in trichomes, epidermal leaf cells, anther tapetal cells, stigma and in young vascular bundles of expanding leaves, cotyledons, roots, pedicel of flowers and siliques.

The protein resides in the cytoplasm. The protein localises to the cytosol. The enzyme catalyses oxaloacetate + acetyl-CoA + ADP + phosphate = citrate + ATP + CoA. Its function is as follows. ATP citrate-lyase is the primary enzyme responsible for the synthesis of cytosolic acetyl-CoA, used for the elongation of fatty acids and biosynthesis of isoprenoids, flavonoids and malonated derivatives. May supply substrate to the cytosolic acetyl-CoA carboxylase, which generates the malonyl-CoA used for the synthesis of a multitude of compounds, including very long chain fatty acids and flavonoids. Required for normal growth and development and elongation of C18 fatty acids to C20 to C24 fatty acids in seeds. In contrast to all known animal ACL enzymes having a homomeric structure, plant ACLs are composed of alpha and beta chains. This chain is ATP-citrate synthase alpha chain protein 1 (ACLA-1), found in Arabidopsis thaliana (Mouse-ear cress).